Consider the following 468-residue polypeptide: Beta-monoglucosyldiacylglycerol synthase (468 aa).

4 helical membrane-spanning segments follow: residues 51–71, 72–92, 361–381, and 387–407; these read AALVLTIVWSGTIALHLVSWG, SIFILGLTTVLGIHALGVVFA, FMLTMYILPTAAIPDLLMAVV, and MLGPVTGLSVTMSVVGMFAGL.

Belongs to the glycosyltransferase 2 family. The cofactor is Mg(2+).

The protein resides in the membrane. The enzyme catalyses a 1,2-diacyl-sn-glycerol + UDP-alpha-D-glucose = a 1,2-diacyl-3-O-(beta-D-glucopyranosyl)-sn-glycerol + UDP + H(+). Its function is as follows. Glucosyltransferase involved in the biosynthesis of the non-bilayer-forming membrane lipid beta-monoglucosyldiacylglycerol which contributes to regulate the properties and stability of the membrane. Catalyzes the transfer of a glucosyl residue from UDP-Glc to diacylglycerol (DAG) acceptor to form the corresponding beta-glucosyl-DAG (1,2-diacyl-3-O-(beta-D-glucopyranosyl)-sn-glycerol). It can only use UDP-Glc as sugar donor. The protein is Beta-monoglucosyldiacylglycerol synthase of Trichormus variabilis (strain ATCC 29413 / PCC 7937) (Anabaena variabilis).